Reading from the N-terminus, the 250-residue chain is 26 kDa periplasmic immunogenic protein (250 aa).

Residues 1–28 (MNTRASNFLAASFSTIMLVGAFSLPAFA) form the signal peptide.

The protein resides in the periplasm. The protein is 26 kDa periplasmic immunogenic protein (bp26) of Brucella abortus (strain S19).